The primary structure comprises 132 residues: Small ribosomal subunit protein uS8 (132 aa).

It belongs to the universal ribosomal protein uS8 family. Part of the 30S ribosomal subunit. Contacts proteins S5 and S12.

In terms of biological role, one of the primary rRNA binding proteins, it binds directly to 16S rRNA central domain where it helps coordinate assembly of the platform of the 30S subunit. The protein is Small ribosomal subunit protein uS8 of Rhodospirillum centenum (strain ATCC 51521 / SW).